An 83-amino-acid polypeptide reads, in one-letter code: NADH dehydrogenase [ubiquinone] iron-sulfur protein 5-B (83 aa).

Residues 11–52 (KGRCYDFWMDFSECMSHCREPKDCTLLREDYLECLHHSKEFQ) form the CHCH domain. Short sequence motifs (cx9C motif) lie at residues 14–24 (CYDFWMDFSEC) and 34–44 (CTLLREDYLEC). 2 cysteine pairs are disulfide-bonded: C14-C44 and C24-C34. The interval 62-83 (QRKLRAASRKGEETGDGTHTHH) is disordered.

The protein belongs to the complex I NDUFS5 subunit family. In terms of assembly, complex I is composed of at least 49 different subunits. This is a component of the iron-sulfur (IP) fragment of the enzyme.

The protein localises to the mitochondrion. Its subcellular location is the mitochondrion inner membrane. It localises to the mitochondrion intermembrane space. Its function is as follows. Accessory subunit of the mitochondrial membrane respiratory chain NADH dehydrogenase (Complex I), that is believed not to be involved in catalysis. Complex I functions in the transfer of electrons from NADH to the respiratory chain. The immediate electron acceptor for the enzyme is believed to be ubiquinone. This Arabidopsis thaliana (Mouse-ear cress) protein is NADH dehydrogenase [ubiquinone] iron-sulfur protein 5-B.